The primary structure comprises 358 residues: Trace amine-associated receptor 7e (358 aa).

At 1 to 47 (MATGDDSFLWDQDSILSRDLFSATSAELCYENLNRSCVRSPYSPGPR) the chain is on the extracellular side. The N-linked (GlcNAc...) asparagine glycan is linked to Asn34. 2 disulfide bridges follow: Cys37–Cys201 and Cys120–Cys205. A helical membrane pass occupies residues 48-68 (LILYAVFGFGAVLAVCGNLLV). At 69-83 (MTSILHFRQLHSPAN) the chain is on the cytoplasmic side. A helical transmembrane segment spans residues 84–104 (FLVASLACADFLVGLTVMPFS). Over 105 to 121 (TVRSVEGCWYFGEIYCK) the chain is Extracellular. The chain crosses the membrane as a helical span at residues 122–143 (LHTCFDVSFCSSSIFHLCFISV). At 144–166 (DRYIAVSDPLIYPTRFTASVSNK) the chain is on the cytoplasmic side. A helical membrane pass occupies residues 167 to 187 (CITFSWLLSISYGFSLIYTGA). Over 188-212 (SEAGLEDLVSALTCVGGCQLAVNQS) the chain is Extracellular. A glycan (N-linked (GlcNAc...) asparagine) is linked at Asn210. The chain crosses the membrane as a helical span at residues 213 to 233 (WVFINFLLFLIPTLVMITVYS). At 234 to 274 (KIFLIAKQQAQNIEKMSKQTARASDSYKDRVAKRERKAAKT) the chain is on the cytoplasmic side. Residues 275-295 (LGIAVAAFLLSWLPYFIDSFI) form a helical membrane-spanning segment. The Extracellular segment spans residues 296–309 (DAFLGFITPTYVYE). A helical membrane pass occupies residues 310–333 (ILVWIAYYNSAMNPLIYAFFYPWF). At 334-358 (RKAIKLTVTGKILRENSSTTNLFPE) the chain is on the cytoplasmic side.

It belongs to the G-protein coupled receptor 1 family. As to expression, specifically expressed in neurons of the olfactory epithelium.

It localises to the cell membrane. Its function is as follows. Olfactory receptor specific for N,N-dimethylalkylamines trace amines. Trace amine compounds are enriched in animal body fluids and act on trace amine-associated receptors (TAARs) to elicit both intraspecific and interspecific innate behaviors. Ligand-binding causes a conformation change that triggers signaling via G(s)-class of G alpha proteins (GNAL or GNAS). The polypeptide is Trace amine-associated receptor 7e (Mus musculus (Mouse)).